Consider the following 79-residue polypeptide: Darcynin (79 aa).

This sequence belongs to the darcynin family.

The chain is Darcynin from Chromobacterium violaceum (strain ATCC 12472 / DSM 30191 / JCM 1249 / CCUG 213 / NBRC 12614 / NCIMB 9131 / NCTC 9757 / MK).